Consider the following 1460-residue polypeptide: Collagen alpha-1(I) chain (1460 aa).

Positions 1 to 22 are cleaved as a signal peptide; that stretch reads MFSFVDLRLLLLLAATALLTHG. Positions 23–157 are cleaved as a propeptide — N-terminal propeptide; that stretch reads QEEGQEEDIP…PPGLGGNFAP (135 aa). The 59-residue stretch at 34–92 folds into the VWFC domain; sequence VTCVQNGLRYYDRDVWKPEACRICVCDNGNVLCDDVICDETKNCPGAQVPPGECCPVCP. The tract at residues 96 to 1213 is disordered; the sequence is ASPTDQETTG…KAHDGGRYYR (1118 aa). Positions 134-149 are enriched in pro residues; that stretch reads PGLPGPPGPPGPPGPP. The segment at 158–174 is nonhelical region (N-terminal); the sequence is QMSYGYDEKSTGGISVP. Position 166 is an allysine (K166). S167 carries the phosphoserine modification. The tract at residues 175 to 1188 is triple-helical region; the sequence is GPMGPSGPRG…PGPPGPPGPP (1014 aa). Residues P186, P189, P192, P201, P204, P207, P222, P237, P243, P252, and P258 each carry the 4-hydroxyproline modification. Over residues 194–213 the composition is skewed to low complexity; it reads PQGFQGPPGEPGEPGASGPM. Basic and acidic residues predominate over residues 225–239; the sequence is NGDDGEAGKPGRPGE. K261 is subject to 5-hydroxylysine; alternate. K261 carries O-linked (Gal...) hydroxylysine; alternate glycosylation. S267 bears the Phosphoserine mark. Over residues 275–291 the composition is skewed to low complexity; that stretch reads DAGPAGPKGEPGSPGEN. A 4-hydroxyproline mark is found at P285, P288, P294, P303, and P309. Residues 314 to 327 are compositionally biased toward low complexity; that stretch reads PAGARGNDGATGAA. The span at 329 to 341 shows a compositional bias: pro residues; it reads PPGPTGPAGPPGF. P330, P339, P342, P369, P372, P384, P390, P399, P405, P408, and P423 each carry 4-hydroxyproline. Low complexity predominate over residues 375–414; sequence AGAAGPAGNPGADGQPGAKGANGAPGIAGAPGFPGARGPS. The residue at position 426 (K426) is a 5-hydroxylysine. 8 positions are modified to 4-hydroxyproline: P432, P435, P447, P456, P471, P477, P486, and P492. Positions 481 to 490 are enriched in gly residues; the sequence is GERGGPGSRG. K501 carries the 5-hydroxylysine modification. 28 positions are modified to 4-hydroxyproline: P510, P519, P525, P531, P540, P543, P552, P561, P567, P579, P588, P597, P600, P618, P636, P642, P648, P654, P660, P666, P678, P687, P699, P711, P714, P720, P726, and P735. Over residues 534-560 the composition is skewed to low complexity; that stretch reads KGLTGSPGSPGPDGKTGPPGPAGQDGR. A compositionally biased stretch (low complexity) spans 569 to 588; it reads ARGQAGVMGFPGPKGAAGEP. Residues 630 to 657 are compositionally biased toward low complexity; it reads QGPAGSPGFQGLPGPAGPPGEAGKPGEQ. Over residues 692-720 the composition is skewed to low complexity; sequence PRGANGAPGNDGAKGDAGAPGAPGSQGAP. A Cell attachment site motif is present at residues 741–743; sequence RGD. Position 747 is a 5-hydroxylysine (K747). Residues P753, P768, and P774 each carry the 4-hydroxyproline modification. Positions 780-794 are enriched in low complexity; sequence AGPSGPAGPTGARGA. A Phosphoserine modification is found at S783. 8 positions are modified to 4-hydroxyproline: P795, P801, P804, P813, P819, P837, P846, and P855. Residues 807 to 834 are compositionally biased toward low complexity; the sequence is AGFAGPPGADGQPGAKGEPGDAGAKGDA. Over residues 836–848 the composition is skewed to pro residues; the sequence is PPGPAGPTGPPGP. Residue K858 is modified to 5-hydroxylysine. Positions 863 to 879 are enriched in low complexity; that stretch reads SAGPPGATGFPGAAGRV. 4-hydroxyproline occurs at positions 867 and 873. P881 is subject to 3-hydroxyproline. P882, P891, P894, P915, P924, P933, P942, P960, P969, P972, P978, P993, P999, P1005, P1014, and P1020 each carry 4-hydroxyproline. Positions 908–917 are enriched in low complexity; sequence ETGPAGRPGE. Residues 927–951 show a composition bias toward low complexity; the sequence is AGEKGSPGADGPAGAPGTPGPQGIA. Pro residues predominate over residues 992 to 1002; that stretch reads PPGPMGPPGLA. Residues 1004–1019 show a composition bias toward low complexity; the sequence is PPGESGREGSPGAEGS. The residue at position 1029 (K1029) is a 5-hydroxylysine. The segment covering 1038–1053 has biased composition (pro residues); that stretch reads AGPPGAPGAPGAPGPV. P1041, P1044, and P1047 each carry 4-hydroxyproline. Over residues 1074–1088 the composition is skewed to low complexity; that stretch reads IGPVGARGPAGPQGP. Residues 1089 to 1091 carry the Cell attachment site motif; that stretch reads RGD. Residues 1089 to 1103 show a composition bias toward basic and acidic residues; it reads RGDKGETGEQGDRGI. K1092 bears the 5-hydroxylysine mark. A 5-hydroxylysine; alternate modification is found at K1104. An O-linked (Gal...) hydroxylysine; alternate glycan is attached at K1104. 5 positions are modified to 4-hydroxyproline: P1116, P1119, P1122, P1140, and P1155. The span at 1122 to 1155 shows a compositional bias: low complexity; it reads PGEQGPSGASGPAGPRGPPGSAGSPGKDGLNGLP. P1160 carries the 3-hydroxyproline modification. At P1161 the chain carries 4-hydroxyproline. Residues 1173–1188 show a composition bias toward pro residues; it reads VGPPGPPGPPGPPGPP. The residue at position 1175 (P1175) is a 3-hydroxyproline. P1176 is subject to 4-hydroxyproline. P1178 carries the post-translational modification 3-hydroxyproline. P1179 bears the 4-hydroxyproline mark. P1181 is modified (3-hydroxyproline). P1182, P1185, and P1188 each carry 4-hydroxyproline. The tract at residues 1189–1214 is nonhelical region (C-terminal); sequence SGGFDFSFLPQPPQEKAHDGGRYYRA. Over residues 1203 to 1213 the composition is skewed to basic and acidic residues; it reads EKAHDGGRYYR. K1204 carries the allysine modification. A propeptide spans 1215–1460 (C-terminal propeptide); the sequence is DDANVVRDRD…GMDIGPVCFL (246 aa). A Fibrillar collagen NC1 domain is found at 1225 to 1460; that stretch reads LEVDTTLKSL…GMDIGPVCFL (236 aa). Intrachain disulfides connect C1255/C1287, C1295/C1458, and C1366/C1411. Ca(2+) is bound by residues D1273, N1275, Q1276, C1278, and D1281. An N-linked (GlcNAc...) asparagine glycan is attached at N1361.

The protein belongs to the fibrillar collagen family. In terms of assembly, trimers of one alpha 2(I) and two alpha 1(I) chains. Interacts with MRC2. Interacts with TRAM2. Interacts with MFAP4 in a Ca (2+)-dependent manner. Post-translationally, contains mostly 4-hydroxyproline. Proline residues at the third position of the tripeptide repeating unit (G-X-Y) are hydroxylated in some or all of the chains. Contains 3-hydroxyproline at a few sites. This modification occurs on the first proline residue in the sequence motif Gly-Pro-Hyp, where Hyp is 4-hydroxyproline. In terms of processing, lysine residues at the third position of the tripeptide repeating unit (G-X-Y) are 5-hydroxylated in some or all of the chains. Post-translationally, O-glycosylated on hydroxylated lysine residues. The O-linked glycan consists of a Glc-Gal disaccharide.

It is found in the secreted. The protein resides in the extracellular space. The protein localises to the extracellular matrix. Its function is as follows. Type I collagen is a member of group I collagen (fibrillar forming collagen). This chain is Collagen alpha-1(I) chain (COL1A1), found in Canis lupus familiaris (Dog).